We begin with the raw amino-acid sequence, 290 residues long: ATP synthase subunit a (290 aa).

6 helical membrane passes run 44–64 (AFHV…ILLF), 104–124 (VIAP…AIDL), 161–181 (LSVF…GGFI), 194–214 (ILVQ…TLVA), 233–253 (VFIL…GMGV), and 260–280 (AVFH…LTIV).

This sequence belongs to the ATPase A chain family. F-type ATPases have 2 components, CF(1) - the catalytic core - and CF(0) - the membrane proton channel. CF(1) has five subunits: alpha(3), beta(3), gamma(1), delta(1), epsilon(1). CF(0) has three main subunits: a(1), b(2) and c(9-12). The alpha and beta chains form an alternating ring which encloses part of the gamma chain. CF(1) is attached to CF(0) by a central stalk formed by the gamma and epsilon chains, while a peripheral stalk is formed by the delta and b chains.

It is found in the cell inner membrane. Its function is as follows. Key component of the proton channel; it plays a direct role in the translocation of protons across the membrane. The polypeptide is ATP synthase subunit a (Pseudomonas fluorescens (strain ATCC BAA-477 / NRRL B-23932 / Pf-5)).